Here is a 244-residue protein sequence, read N- to C-terminus: UPF0280 protein Mhun_0136 (244 aa).

It belongs to the UPF0280 family.

The sequence is that of UPF0280 protein Mhun_0136 from Methanospirillum hungatei JF-1 (strain ATCC 27890 / DSM 864 / NBRC 100397 / JF-1).